Reading from the N-terminus, the 146-residue chain is Snaclec stejaggregin-B subunit beta-2 (146 aa).

The first 23 residues, 1–23 (MGRFIFVSFGLLVVFLSLSGSGA), serve as a signal peptide directing secretion. A C-type lectin domain is found at 32–143 (YDLYCYRVFQ…CSQTYPFVCK (112 aa)). Cystine bridges form between cysteine 53-cysteine 142 and cysteine 119-cysteine 134.

It belongs to the snaclec family. As to quaternary structure, heteromultimer; disulfide-linked. Expressed by the venom gland.

The protein localises to the secreted. Interferes with one step of hemostasis (modulation of platelet aggregation, or coagulation cascade, for example). This Trimeresurus stejnegeri (Chinese green tree viper) protein is Snaclec stejaggregin-B subunit beta-2.